Here is a 161-residue protein sequence, read N- to C-terminus: Cyclic pyranopterin monophosphate synthase (161 aa).

Substrate contacts are provided by residues 78 to 80 (LCH) and 116 to 117 (ME). Asp-131 is an active-site residue.

This sequence belongs to the MoaC family. Homohexamer; trimer of dimers.

It catalyses the reaction (8S)-3',8-cyclo-7,8-dihydroguanosine 5'-triphosphate = cyclic pyranopterin phosphate + diphosphate. The protein operates within cofactor biosynthesis; molybdopterin biosynthesis. Its function is as follows. Catalyzes the conversion of (8S)-3',8-cyclo-7,8-dihydroguanosine 5'-triphosphate to cyclic pyranopterin monophosphate (cPMP). This Bordetella parapertussis (strain 12822 / ATCC BAA-587 / NCTC 13253) protein is Cyclic pyranopterin monophosphate synthase.